Reading from the N-terminus, the 360-residue chain is UDP-N-acetylglucosamine--N-acetylmuramyl-(pentapeptide) pyrophosphoryl-undecaprenol N-acetylglucosamine transferase (360 aa).

Residues 12–14 (TGG), N124, R161, S189, I243, and Q288 contribute to the UDP-N-acetyl-alpha-D-glucosamine site.

It belongs to the glycosyltransferase 28 family. MurG subfamily.

Its subcellular location is the cell inner membrane. It catalyses the reaction di-trans,octa-cis-undecaprenyl diphospho-N-acetyl-alpha-D-muramoyl-L-alanyl-D-glutamyl-meso-2,6-diaminopimeloyl-D-alanyl-D-alanine + UDP-N-acetyl-alpha-D-glucosamine = di-trans,octa-cis-undecaprenyl diphospho-[N-acetyl-alpha-D-glucosaminyl-(1-&gt;4)]-N-acetyl-alpha-D-muramoyl-L-alanyl-D-glutamyl-meso-2,6-diaminopimeloyl-D-alanyl-D-alanine + UDP + H(+). Its pathway is cell wall biogenesis; peptidoglycan biosynthesis. Cell wall formation. Catalyzes the transfer of a GlcNAc subunit on undecaprenyl-pyrophosphoryl-MurNAc-pentapeptide (lipid intermediate I) to form undecaprenyl-pyrophosphoryl-MurNAc-(pentapeptide)GlcNAc (lipid intermediate II). This is UDP-N-acetylglucosamine--N-acetylmuramyl-(pentapeptide) pyrophosphoryl-undecaprenol N-acetylglucosamine transferase from Acidithiobacillus ferrooxidans (strain ATCC 23270 / DSM 14882 / CIP 104768 / NCIMB 8455) (Ferrobacillus ferrooxidans (strain ATCC 23270)).